We begin with the raw amino-acid sequence, 328 residues long: dTDP-4-dehydrorhamnose 3,5-epimerase (328 aa).

Substrate-binding positions include Arg-23, Glu-28, 46-48 (QEN), and Arg-58. Catalysis depends on His-61, which acts as the Proton acceptor. Residues Lys-70 and His-117 each contribute to the substrate site. Tyr-130 serves as the catalytic Proton donor. Substrate-binding residues include Glu-141 and Lys-166.

Belongs to the dTDP-4-dehydrorhamnose 3,5-epimerase family. As to quaternary structure, homodimer.

It catalyses the reaction dTDP-4-dehydro-6-deoxy-alpha-D-glucose = dTDP-4-dehydro-beta-L-rhamnose. Its pathway is carbohydrate biosynthesis; dTDP-L-rhamnose biosynthesis. The protein operates within bacterial outer membrane biogenesis; LPS O-antigen biosynthesis. Functionally, catalyzes the epimerization of the C3' and C5'positions of dTDP-6-deoxy-D-xylo-4-hexulose, forming dTDP-6-deoxy-L-lyxo-4-hexulose. The sequence is that of dTDP-4-dehydrorhamnose 3,5-epimerase (rfbC) from Neisseria gonorrhoeae.